Consider the following 1926-residue polypeptide: Myosin-15 (1926 aa).

The Myosin N-terminal SH3-like domain maps to 29 to 79; the sequence is DGKKKCWIPDGENAYIEAEVKGSEDDGTVIVETADGESLSIKEDKIQQMNP. The region spanning 83-770 is the Myosin motor domain; it reads EMIEDMAMLT…FLGQLEAIRD (688 aa). Lys127 carries the N6,N6,N6-trimethyllysine modification. 176 to 183 contributes to the ATP binding site; the sequence is GESGAGKT. 2 actin-binding regions span residues 647-669 and 749-763; these read LNKL…NPNV and RFGI…GFLG. Residues 773 to 802 form the IQ domain; it reads LSKVFTLFQARAQGKLMRIKFQKILEERDA. Positions 833–1926 form a coiled coil; sequence KSSEVGEEVA…REFGKKVQEE (1094 aa).

Belongs to the TRAFAC class myosin-kinesin ATPase superfamily. Myosin family. As to quaternary structure, muscle myosin is a hexameric protein that consists of 2 heavy chain subunits (MHC), 2 alkali light chain subunits (MLC) and 2 regulatory light chain subunits (MLC-2).

The protein localises to the cytoplasm. Its subcellular location is the myofibril. Functionally, muscle contraction. This Homo sapiens (Human) protein is Myosin-15 (MYH15).